The chain runs to 161 residues: Nucleotide-binding protein Rpic_2826 (161 aa).

The protein belongs to the YajQ family.

Nucleotide-binding protein. The sequence is that of Nucleotide-binding protein Rpic_2826 from Ralstonia pickettii (strain 12J).